The following is a 221-amino-acid chain: Thyrotroph embryonic factor (221 aa).

The segment at 72–116 (ESASSSTASPPSSSTAVFQPSETVSSTESSLEKERETPSPIDPNC) is disordered. Low complexity predominate over residues 73 to 100 (SASSSTASPPSSSTAVFQPSETVSSTES). Residues 173-221 (DEKYWTRRKKNNVAAKRSRDARRLKENQITIRAAFLEKENTALRTEVAD) form the bZIP domain. The segment at 175–195 (KYWTRRKKNNVAAKRSRDARR) is basic motif. The tract at residues 196–203 (LKENQITI) is leucine-zipper.

This sequence belongs to the bZIP family. PAR subfamily. As to quaternary structure, binds DNA as a homodimer or a heterodimer. Can form a heterodimer with DBP.

The protein resides in the nucleus. Functionally, transcription factor that binds to and transactivates the TSHB promoter. Binds to a minimal DNA-binding sequence 5'-[TC][AG][AG]TTA[TC][AG]-3'. This chain is Thyrotroph embryonic factor (TEF), found in Phodopus sungorus (Striped hairy-footed hamster).